Consider the following 229-residue polypeptide: Lipoprotein-releasing system ATP-binding protein LolD (229 aa).

The ABC transporter domain occupies 9–229 (LRLEQVARRY…TIREGQIVPA (221 aa)). 45–52 (APSGTGKS) serves as a coordination point for ATP.

Belongs to the ABC transporter superfamily. Lipoprotein translocase (TC 3.A.1.125) family. In terms of assembly, the complex is composed of two ATP-binding proteins (LolD) and two transmembrane proteins (LolC and LolE).

Its subcellular location is the cell inner membrane. Its function is as follows. Part of the ABC transporter complex LolCDE involved in the translocation of mature outer membrane-directed lipoproteins, from the inner membrane to the periplasmic chaperone, LolA. Responsible for the formation of the LolA-lipoprotein complex in an ATP-dependent manner. In Granulibacter bethesdensis (strain ATCC BAA-1260 / CGDNIH1), this protein is Lipoprotein-releasing system ATP-binding protein LolD.